Here is a 1609-residue protein sequence, read N- to C-terminus: Chitin synthase 5 (1609 aa).

Disordered regions lie at residues 1-188 (MNPF…DRER), 248-280 (SGLG…GRDE), and 294-320 (VSLR…ESKT). Residues 1–326 (MNPFESLPDA…ESKTSRIAPG (326 aa)) lie on the Cytoplasmic side of the membrane. Residues 34 to 44 (PGSTGRPQNPI) are compositionally biased toward polar residues. A compositionally biased stretch (low complexity) spans 61–82 (PQQQQQQQQQQQQQQQRSQQPF). The span at 100-111 (AYLNSTSSQPTQ) shows a compositional bias: polar residues. Basic and acidic residues predominate over residues 134–146 (DSVKSYGDDKRSI). A compositionally biased stretch (polar residues) spans 147–163 (NDPNSSSTALTQVNSLD). A compositionally biased stretch (low complexity) spans 253–267 (TGPTNVPPGGLGRAP). The span at 307 to 320 (PSKEVPRDLGESKT) shows a compositional bias: basic and acidic residues. The chain crosses the membrane as a helical span at residues 327–347 (PVGGWMIYCYILTICCPGPFL). Over 348-364 (RIFGIRTPEQQRAWREK) the chain is Extracellular. The helical transmembrane segment at 365–385 (MGLIGIITLIMAAVGFLTFGF) threads the bilayer. Residues 386-624 (TQTVCGQQPD…ASKVELYLSL (239 aa)) are Cytoplasmic-facing. Residues 625–645 (VFIIGVVAIKFFMAVMFGWFI) form a helical membrane-spanning segment. Topologically, residues 646-1176 (SWRLGNYANE…MRFVVFMELT (531 aa)) are extracellular. A glycan (N-linked (GlcNAc...) asparagine) is linked at Asn654. Residues 729-767 (GVASPLGGSPPGSPSVAGGRSSASLAPAHSRRSSFSGSP) are disordered. Residues 742–752 (PSVAGGRSSAS) are compositionally biased toward low complexity. Residues Asn1015 and Asn1144 are each glycosylated (N-linked (GlcNAc...) asparagine). Residues 1177-1197 (GTLVLPAAIAFTLYVVVQAFL) form a helical membrane-spanning segment. The Cytoplasmic segment spans residues 1198-1202 (PNVPT). Residues 1203–1223 (PTIPLILLALILGLPGILIVV) form a helical membrane-spanning segment. At 1224–1227 (TSRK) the chain is on the extracellular side. The helical transmembrane segment at 1228–1248 (IAYVGWMLIYLLSLPIWNFVL) threads the bilayer. Topologically, residues 1249–1609 (PLYAYWHMDD…PPGAAPPSFD (361 aa)) are cytoplasmic. Disordered stretches follow at residues 1354–1381 (PNAM…PSGA) and 1399–1609 (TDAK…PSFD). Composition is skewed to polar residues over residues 1502-1514 (NVST…TVSE) and 1530-1552 (GSAS…QTRP). The segment covering 1568–1588 (AQGVRQVQRGARRSQMPNSAA) has biased composition (low complexity).

It belongs to the chitin synthase family. Class IV subfamily.

The protein resides in the cell membrane. It is found in the cytoplasmic vesicle membrane. It catalyses the reaction [(1-&gt;4)-N-acetyl-beta-D-glucosaminyl](n) + UDP-N-acetyl-alpha-D-glucosamine = [(1-&gt;4)-N-acetyl-beta-D-glucosaminyl](n+1) + UDP + H(+). Polymerizes chitin, a structural polymer of the cell wall and septum, by transferring the sugar moiety of UDP-GlcNAc to the non-reducing end of the growing chitin polymer. The chain is Chitin synthase 5 from Mycosarcoma maydis (Corn smut fungus).